We begin with the raw amino-acid sequence, 184 residues long: ATP-dependent 6-phosphofructokinase (184 aa).

The tract at residues 1-184 (GGDGSLTGAN…TRTTVLGHIQ (184 aa)) is N-terminal catalytic PFK domain 1. 2 to 5 (GDGS) serves as a coordination point for ATP. Asp-3 contributes to the Mg(2+) binding site. Substrate contacts are provided by residues 48–50 (SID), Arg-85, 92–94 (MGR), Glu-148, Arg-176, and 182–184 (HIQ). The active-site Proton acceptor is Asp-50.

It belongs to the phosphofructokinase type A (PFKA) family. ATP-dependent PFK group I subfamily. Eukaryotic two domain clade 'E' sub-subfamily. Homotetramer. It depends on Mg(2+) as a cofactor.

The protein localises to the cytoplasm. It catalyses the reaction beta-D-fructose 6-phosphate + ATP = beta-D-fructose 1,6-bisphosphate + ADP + H(+). Its pathway is carbohydrate degradation; glycolysis; D-glyceraldehyde 3-phosphate and glycerone phosphate from D-glucose: step 3/4. Its activity is regulated as follows. Allosterically activated by ADP, AMP, or fructose 2,6-bisphosphate, and allosterically inhibited by ATP or citrate. Catalyzes the phosphorylation of D-fructose 6-phosphate to fructose 1,6-bisphosphate by ATP, the first committing step of glycolysis. The protein is ATP-dependent 6-phosphofructokinase (PFK) of Calanus finmarchicus (Calanus tonsus).